A 775-amino-acid polypeptide reads, in one-letter code: Beta-galactosidase 7 (775 aa).

A signal peptide spans 1–17; it reads MRGGMAITAALVVVAAA. Catalysis depends on E185, which acts as the Proton donor. The Nucleophile role is filled by E256. Residues N257, N266, N277, N358, and N602 are each glycosylated (N-linked (GlcNAc...) asparagine). In terms of domain architecture, SUEL-type lectin spans 689 to 775; the sequence is RGKVPKVRIW…KSLLVVADCR (87 aa).

This sequence belongs to the glycosyl hydrolase 35 family.

The protein localises to the secreted. It is found in the extracellular space. The protein resides in the apoplast. It catalyses the reaction Hydrolysis of terminal non-reducing beta-D-galactose residues in beta-D-galactosides.. This is Beta-galactosidase 7 from Oryza sativa subsp. japonica (Rice).